A 180-amino-acid chain; its full sequence is CASP-like protein 2A3 (180 aa).

At 1–13 (MELIYGSTMRKKW) the chain is on the cytoplasmic side. Residues 14–34 (IEPALRFLPVGLCISALALML) form a helical membrane-spanning segment. Topologically, residues 35–55 (KSKEGNENGILEYKHVGAFRY) are extracellular. A helical transmembrane segment spans residues 56–76 (LAYANGICAAYSVLSTFNSVV). The Cytoplasmic segment spans residues 77-85 (PRSCSLSRA). Residues 86-106 (WFVFVFDQAFTYLMLGAGAVV) traverse the membrane as a helical segment. At 107–135 (TEVLYLAYKGDEKITWFEICPYYGRFCNR) the chain is on the extracellular side. Residues 136–156 (VAASLVISFLALLCFIPLSLI) traverse the membrane as a helical segment. Over 157–180 (SAYRVFSKYDPPSLCKKDQITSQS) the chain is Cytoplasmic.

This sequence belongs to the Casparian strip membrane proteins (CASP) family. In terms of assembly, homodimer and heterodimers.

It is found in the cell membrane. This Picea sitchensis (Sitka spruce) protein is CASP-like protein 2A3.